A 229-amino-acid chain; its full sequence is Putative germin-like protein subfamily 1 member 2 (229 aa).

The first 24 residues, 1–24 (MKGLVQFLVAKIILLVLASTFVHC), serve as a signal peptide directing secretion. Cys34 and Cys50 are oxidised to a cystine. Asn38 and Asn71 each carry an N-linked (GlcNAc...) asparagine glycan. The Cupin type-1 domain occupies 64-215 (SGLNIPGNTS…AFALDVNIVR (152 aa)). 2 residues coordinate Mn(2+): His112 and His114. The N-linked (GlcNAc...) asparagine glycan is linked to Asn139. Position 163 (His163) interacts with Mn(2+).

The protein belongs to the germin family. As to quaternary structure, oligomer (believed to be a pentamer but probably hexamer).

It localises to the secreted. The protein localises to the extracellular space. The protein resides in the apoplast. Its function is as follows. May play a role in plant defense. Probably has no oxalate oxidase activity even if the active site is conserved. The polypeptide is Putative germin-like protein subfamily 1 member 2 (Arabidopsis thaliana (Mouse-ear cress)).